Here is a 75-residue protein sequence, read N- to C-terminus: Large ribosomal subunit protein bL31 (75 aa).

This sequence belongs to the bacterial ribosomal protein bL31 family. Type A subfamily. As to quaternary structure, part of the 50S ribosomal subunit.

Binds the 23S rRNA. The sequence is that of Large ribosomal subunit protein bL31 from Rhodopseudomonas palustris (strain BisB5).